Consider the following 246-residue polypeptide: 3-deoxy-manno-octulosonate cytidylyltransferase (246 aa).

This sequence belongs to the KdsB family.

Its subcellular location is the cytoplasm. The catalysed reaction is 3-deoxy-alpha-D-manno-oct-2-ulosonate + CTP = CMP-3-deoxy-beta-D-manno-octulosonate + diphosphate. It participates in nucleotide-sugar biosynthesis; CMP-3-deoxy-D-manno-octulosonate biosynthesis; CMP-3-deoxy-D-manno-octulosonate from 3-deoxy-D-manno-octulosonate and CTP: step 1/1. It functions in the pathway bacterial outer membrane biogenesis; lipopolysaccharide biosynthesis. In terms of biological role, activates KDO (a required 8-carbon sugar) for incorporation into bacterial lipopolysaccharide in Gram-negative bacteria. The polypeptide is 3-deoxy-manno-octulosonate cytidylyltransferase (Leptospira borgpetersenii serovar Hardjo-bovis (strain JB197)).